Reading from the N-terminus, the 614-residue chain is Vitamin B12 transporter BtuB (614 aa).

An N-terminal signal peptide occupies residues 1–20; the sequence is MIKKASLLTACSVTAFSAWA. A TonB box motif is present at residues 26–33; it reads DTLVVTAN. The region spanning 38 to 152 is the TBDR plug domain; that stretch reads PRSTVLAPTT…IGGVVNIITT (115 aa). Cyanocob(III)alamin-binding positions include leucine 83, serine 85, asparagine 92, and 110-111; that span reads VS. The TBDR beta-barrel domain occupies 155–614; it reads EPGTEISAGW…EYTLSGSYTF (460 aa). The next 3 beta stranded transmembrane spans lie at 158–165, 169–178, and 184–195; these read TEISAGWG, YQNYDVSTQQ, and TRVTLLGDYAHT. Positions 199, 211, 213, and 215 each coordinate Ca(2+). The next 2 membrane-spanning stretches (beta stranded) occupy residues 217–227 and 232–248; these read FLSKTLYGALE and DAWS…NRTN. Residues tyrosine 249 and aspartate 250 each coordinate Ca(2+). Alanine 251 contributes to the cyanocob(III)alamin binding site. Aspartate 261 contacts Ca(2+). The next 14 beta stranded transmembrane spans lie at 263 to 277, 279 to 296, 309 to 325, 328 to 337, 353 to 369, 371 to 381, 385 to 400, 403 to 417, 434 to 443, 449 to 458, 473 to 490, 494 to 509, 517 to 529, and 535 to 550; these read RKLY…LRYN, ELIK…KDYN, TLDE…NNVI, HGSIGAGVDW, YDQR…QQVG, FTFEGAARNDD, FGRH…WEFI, YRFI…KAPN, KSKQWEGAFE, VNWRISGYRN, YYNE…TANF, PLTH…ARNA, RRAK…QLDW, and DWGI…YDKD. Residue threonine 309 participates in cyanocob(III)alamin binding. Arginine 517 contributes to the cyanocob(III)alamin binding site. A cyanocob(III)alamin-binding site is contributed by tyrosine 551. The next 3 membrane-spanning stretches (beta stranded) occupy residues 558–572, 585–596, and 602–614; these read TVKM…LAVA, IANLFDKDYETV, and AGRE…SYTF. Residues 597–614 carry the TonB C-terminal box motif; that stretch reads YGYQTAGREYTLSGSYTF.

It belongs to the TonB-dependent receptor family. BtuB (TC 1.B.14.3.1) subfamily.

Its subcellular location is the cell outer membrane. Its function is as follows. Involved in the active translocation of vitamin B12 (cyanocobalamin) across the outer membrane to the periplasmic space. It derives its energy for transport by interacting with the trans-periplasmic membrane protein TonB. The chain is Vitamin B12 transporter BtuB from Escherichia coli O139:H28 (strain E24377A / ETEC).